A 242-amino-acid chain; its full sequence is Zinc import ATP-binding protein ZnuC (242 aa).

The 218-residue stretch at 24 to 241 folds into the ABC transporter domain; that stretch reads INVENLSFFY…EKFLKMFSSY (218 aa). Residue 56-63 participates in ATP binding; sequence GPNGGGKT.

This sequence belongs to the ABC transporter superfamily. Zinc importer (TC 3.A.1.15.5) family. The complex is composed of two ATP-binding proteins (ZnuC), two transmembrane proteins (ZnuB) and a solute-binding protein (ZnuA).

The protein resides in the cell inner membrane. It catalyses the reaction Zn(2+)(out) + ATP(in) + H2O(in) = Zn(2+)(in) + ADP(in) + phosphate(in) + H(+)(in). Part of the ABC transporter complex ZnuABC involved in zinc import. Responsible for energy coupling to the transport system. The sequence is that of Zinc import ATP-binding protein ZnuC from Ehrlichia chaffeensis (strain ATCC CRL-10679 / Arkansas).